A 718-amino-acid polypeptide reads, in one-letter code: Peroxisomal bifunctional enzyme (718 aa).

Residues 1-280 (MAEYLRLPHS…FAEKSANKWS (280 aa)) form an enoyl-CoA hydratase / isomerase region. Lysine 38 carries the post-translational modification N6-succinyllysine. Position 99 (glycine 99) interacts with substrate. An N6-acetyllysine; alternate mark is found at lysine 163 and lysine 172. N6-succinyllysine; alternate is present on residues lysine 163 and lysine 172. Residue lysine 181 is modified to N6-succinyllysine. An N6-acetyllysine; alternate mark is found at lysine 189 and lysine 217. Lysine 189 and lysine 217 each carry N6-succinyllysine; alternate. N6-succinyllysine is present on lysine 240. Residue lysine 248 is modified to N6-acetyllysine. Position 252 is an N6-succinyllysine (lysine 252). Lysine 274 is modified (N6-acetyllysine; alternate). The residue at position 274 (lysine 274) is an N6-succinyllysine; alternate. An N6-succinyllysine mark is found at lysine 278, lysine 288, and lysine 329. The tract at residues 281–567 (TPSGASWKTA…DMLCEAGRFG (287 aa)) is 3-hydroxyacyl-CoA dehydrogenase. An N6-acetyllysine mark is found at lysine 344, lysine 348, lysine 355, and lysine 459. Lysine 527 bears the N6-succinyllysine mark. Threonine 543 carries the post-translational modification Phosphothreonine. Position 572 is an N6-succinyllysine (lysine 572). Lysine 579, lysine 586, and lysine 705 each carry N6-acetyllysine; alternate. N6-succinyllysine; alternate occurs at positions 579, 586, and 705. The Microbody targeting signal motif lies at 716-718 (SKL). Position 717 is an N6-succinyllysine (lysine 717).

In the N-terminal section; belongs to the enoyl-CoA hydratase/isomerase family. This sequence in the C-terminal section; belongs to the 3-hydroxyacyl-CoA dehydrogenase family. As to quaternary structure, monomer. Acetylated, leading to enhanced enzyme activity. Acetylation is enhanced by up to 80% after treatment either with trichostin A (TCA) or with nicotinamide (NAM) with highest increase on Lys-344. Acetylation and enzyme activity increased by about 1.5% on addition of fatty acids.

Its subcellular location is the peroxisome. The catalysed reaction is a (3S)-3-hydroxyacyl-CoA = a (2E)-enoyl-CoA + H2O. It catalyses the reaction a 4-saturated-(3S)-3-hydroxyacyl-CoA = a (3E)-enoyl-CoA + H2O. The enzyme catalyses a (3Z)-enoyl-CoA = a 4-saturated (2E)-enoyl-CoA. It carries out the reaction a (3E)-enoyl-CoA = a 4-saturated (2E)-enoyl-CoA. The catalysed reaction is a (3S)-3-hydroxyacyl-CoA + NAD(+) = a 3-oxoacyl-CoA + NADH + H(+). It catalyses the reaction (2S,3S)-3-hydroxy-2-methylbutanoyl-CoA = (2E)-2-methylbut-2-enoyl-CoA + H2O. The enzyme catalyses (2E)-dodecenedioyl-CoA + H2O = (3S)-hydroxydodecanedioyl-CoA. It carries out the reaction (3S)-hydroxydodecanedioyl-CoA + NAD(+) = 3-oxododecanedioyl-CoA + NADH + H(+). The catalysed reaction is (2E)-octenedioyl-CoA + H2O = (3S)-hydroxyoctanedioyl-CoA. It catalyses the reaction (3S)-hydroxyoctanedioyl-CoA + NAD(+) = 3-oxooctanedioyl-CoA + NADH + H(+). The enzyme catalyses (2E)-decenedioyl-CoA + H2O = (3S)-hydroxydecanedioyl-CoA. It carries out the reaction (3S)-hydroxydecanedioyl-CoA + NAD(+) = 3-oxodecanedioyl-CoA + NADH + H(+). The catalysed reaction is (2E)-tetradecenedioyl-CoA + H2O = (3S)-hydroxytetradecanedioyl-CoA. It catalyses the reaction (3S)-hydroxytetradecanedioyl-CoA + NAD(+) = 3-oxotetradecanedioyl-CoA + NADH + H(+). The enzyme catalyses (3E,5Z)-tetradecadienoyl-CoA = (2E,5Z)-tetradecadienoyl-CoA. It carries out the reaction (3E,5Z)-octadienoyl-CoA = (2E,5Z)-octadienoyl-CoA. The catalysed reaction is (3S)-hydroxydecanoyl-CoA + NAD(+) = 3-oxodecanoyl-CoA + NADH + H(+). It catalyses the reaction (3E)-decenoyl-CoA = (2E)-decenoyl-CoA. The enzyme catalyses (3Z)-hexenoyl-CoA = (2E)-hexenoyl-CoA. It carries out the reaction (3E)-hexenoyl-CoA = (2E)-hexenoyl-CoA. The catalysed reaction is (3S)-hydroxydecanoyl-CoA = (2E)-decenoyl-CoA + H2O. It catalyses the reaction (3S)-hydroxyhexanoyl-CoA = (2E)-hexenoyl-CoA + H2O. The enzyme catalyses (3S)-hydroxyhexadecanoyl-CoA + NAD(+) = 3-oxohexadecanoyl-CoA + NADH + H(+). It carries out the reaction (3S)-hydroxyhexadecanoyl-CoA = (2E)-hexadecenoyl-CoA + H2O. The catalysed reaction is (2E)-hexadecenedioyl-CoA + H2O = (3S)-hydroxyhexadecanedioyl-CoA. It catalyses the reaction (3S)-hydroxyhexadecanedioyl-CoA + NAD(+) = 3-oxohexadecanedioyl-CoA + NADH + H(+). The protein operates within lipid metabolism; fatty acid beta-oxidation. Enzyme activity enhanced by acetylation. In terms of biological role, peroxisomal trifunctional enzyme possessing 2-enoyl-CoA hydratase, 3-hydroxyacyl-CoA dehydrogenase, and delta 3, delta 2-enoyl-CoA isomerase activities. Catalyzes two of the four reactions of the long chain fatty acids peroxisomal beta-oxidation pathway. Can also use branched-chain fatty acids such as 2-methyl-2E-butenoyl-CoA as a substrate, which is hydrated into (2S,3S)-3-hydroxy-2-methylbutanoyl-CoA. Optimal isomerase for 2,5 double bonds into 3,5 form isomerization in a range of enoyl-CoA species. Also able to isomerize both 3-cis and 3-trans double bonds into the 2-trans form in a range of enoyl-CoA species. With HSD17B4, catalyzes the hydration of trans-2-enoyl-CoA and the dehydrogenation of 3-hydroxyacyl-CoA, but with opposite chiral specificity. Regulates the amount of medium-chain dicarboxylic fatty acids which are essential regulators of all fatty acid oxidation pathways. Also involved in the degradation of long-chain dicarboxylic acids through peroxisomal beta-oxidation. This is Peroxisomal bifunctional enzyme from Mus musculus (Mouse).